Here is a 176-residue protein sequence, read N- to C-terminus: MIRTIQDLLNERVAIGKIVNTHGLKGEVKFFPYTNSEEIVKNLSSVVLYNSEKKAFYNLTVESVRRMNKLFLIRFKSIDTIEAAERIKGCEVFIKYEELPKLSEDEYYFYEILDCDVFYESGENVGKVVDIIETGSNDVLVVRKKKKETLIPMTKDCIVEIDKGAKKIIAKEMEWI.

One can recognise a PRC barrel domain in the interval 104 to 176 (EDEYYFYEIL…KIIAKEMEWI (73 aa)).

It belongs to the RimM family. Binds ribosomal protein uS19.

It is found in the cytoplasm. Functionally, an accessory protein needed during the final step in the assembly of 30S ribosomal subunit, possibly for assembly of the head region. Essential for efficient processing of 16S rRNA. May be needed both before and after RbfA during the maturation of 16S rRNA. It has affinity for free ribosomal 30S subunits but not for 70S ribosomes. This chain is Ribosome maturation factor RimM, found in Thermotoga maritima (strain ATCC 43589 / DSM 3109 / JCM 10099 / NBRC 100826 / MSB8).